The sequence spans 129 residues: Small ribosomal subunit protein uS11 (129 aa).

This sequence belongs to the universal ribosomal protein uS11 family. As to quaternary structure, part of the 30S ribosomal subunit. Interacts with proteins S7 and S18. Binds to IF-3.

In terms of biological role, located on the platform of the 30S subunit, it bridges several disparate RNA helices of the 16S rRNA. Forms part of the Shine-Dalgarno cleft in the 70S ribosome. This Glaesserella parasuis serovar 5 (strain SH0165) (Haemophilus parasuis) protein is Small ribosomal subunit protein uS11.